Consider the following 364-residue polypeptide: Small ribosomal subunit biogenesis GTPase RsgA (364 aa).

The CP-type G domain maps to K101–L264. GTP is bound by residues N154–D157 and G206–T214. Residues C288, C293, H295, and C301 each contribute to the Zn(2+) site. The segment at Q339 to Q364 is disordered. Basic residues predominate over residues Q342–R358.

The protein belongs to the TRAFAC class YlqF/YawG GTPase family. RsgA subfamily. In terms of assembly, monomer. Associates with 30S ribosomal subunit, binds 16S rRNA. Requires Zn(2+) as cofactor.

It is found in the cytoplasm. Its function is as follows. One of several proteins that assist in the late maturation steps of the functional core of the 30S ribosomal subunit. Helps release RbfA from mature subunits. May play a role in the assembly of ribosomal proteins into the subunit. Circularly permuted GTPase that catalyzes slow GTP hydrolysis, GTPase activity is stimulated by the 30S ribosomal subunit. The sequence is that of Small ribosomal subunit biogenesis GTPase RsgA from Syntrophotalea carbinolica (strain DSM 2380 / NBRC 103641 / GraBd1) (Pelobacter carbinolicus).